Reading from the N-terminus, the 959-residue chain is Translation initiation factor IF-2 (959 aa).

The span at 1–10 (MSDKTNDDKT) shows a compositional bias: basic and acidic residues. Residues 1 to 374 (MSDKTNDDKT…SQMQETREKI (374 aa)) are disordered. Residues 27–37 (EQSTVRQNFSH) are compositionally biased toward polar residues. 2 stretches are compositionally biased toward low complexity: residues 63–118 (AAAA…VTKP) and 128–138 (QRPGGQQAQRP). Basic and acidic residues-rich tracts occupy residues 154-225 (SEMD…EAAK) and 232-241 (ARSERRDDAR). Over residues 246 to 284 (GARPQQAGRPQGGRPQPAGRPQQGSPRPAPIIADAAPIA) the composition is skewed to low complexity. Basic and acidic residues predominate over residues 318–333 (PEVRAPKVVKGEDDRR). The tr-type G domain occupies 457-626 (SRPPVVTIMG…LLQAEMLDLK (170 aa)). The G1 stretch occupies residues 466 to 473 (GHVDHGKT). 466–473 (GHVDHGKT) provides a ligand contact to GTP. Positions 491–495 (GITQH) are G2. Residues 512–515 (DTPG) form a G3 region. Residues 512 to 516 (DTPGH) and 566 to 569 (NKID) contribute to the GTP site. Residues 566–569 (NKID) form a G4 region. Residues 602–604 (SAK) are G5.

Belongs to the TRAFAC class translation factor GTPase superfamily. Classic translation factor GTPase family. IF-2 subfamily.

The protein localises to the cytoplasm. Functionally, one of the essential components for the initiation of protein synthesis. Protects formylmethionyl-tRNA from spontaneous hydrolysis and promotes its binding to the 30S ribosomal subunits. Also involved in the hydrolysis of GTP during the formation of the 70S ribosomal complex. This chain is Translation initiation factor IF-2, found in Brucella suis biovar 1 (strain 1330).